Consider the following 108-residue polypeptide: UPF0060 membrane protein YnfA (108 aa).

Over 1–5 (MIKTT) the chain is Periplasmic. A helical membrane pass occupies residues 6-26 (LLFFATALCEIIGCFLPWLWL). The Cytoplasmic segment spans residues 27 to 30 (KRNA). A helical membrane pass occupies residues 31–51 (SIWLLLPAGISLALFVWLLTL). The Periplasmic portion of the chain corresponds to 52 to 60 (HPAASGRVY). Residues 61–81 (AAYGGVYVCTALIWLRVVDGV) form a helical membrane-spanning segment. The Cytoplasmic portion of the chain corresponds to 82–84 (KLT). Residues 85–105 (LYDWTGALIALCGMLIIVAGW) traverse the membrane as a helical segment. Residues 106 to 108 (GRT) are Periplasmic-facing.

The protein belongs to the UPF0060 family.

Its subcellular location is the cell inner membrane. This Escherichia coli O127:H6 (strain E2348/69 / EPEC) protein is UPF0060 membrane protein YnfA.